The sequence spans 88 residues: Small ribosomal subunit protein uS17 (88 aa).

It belongs to the universal ribosomal protein uS17 family. Part of the 30S ribosomal subunit.

In terms of biological role, one of the primary rRNA binding proteins, it binds specifically to the 5'-end of 16S ribosomal RNA. In Lactobacillus delbrueckii subsp. bulgaricus (strain ATCC 11842 / DSM 20081 / BCRC 10696 / JCM 1002 / NBRC 13953 / NCIMB 11778 / NCTC 12712 / WDCM 00102 / Lb 14), this protein is Small ribosomal subunit protein uS17.